Here is an 83-residue protein sequence, read N- to C-terminus: Cytochrome b559 subunit alpha (83 aa).

The helical transmembrane segment at 21 to 35 (IIHSITIPSLFIAGW) threads the bilayer. Position 23 (histidine 23) interacts with heme.

Heterodimer of an alpha subunit and a beta subunit. PSII is composed of 1 copy each of membrane proteins PsbA, PsbB, PsbC, PsbD, PsbE, PsbF, PsbH, PsbI, PsbJ, PsbK, PsbL, PsbM, PsbT, PsbX, PsbY, PsbZ, Psb30/Ycf12, at least 3 peripheral proteins of the oxygen-evolving complex and a large number of cofactors. It forms dimeric complexes. Requires heme b as cofactor.

It is found in the plastid. The protein localises to the chloroplast thylakoid membrane. In terms of biological role, this b-type cytochrome is tightly associated with the reaction center of photosystem II (PSII). PSII is a light-driven water:plastoquinone oxidoreductase that uses light energy to abstract electrons from H(2)O, generating O(2) and a proton gradient subsequently used for ATP formation. It consists of a core antenna complex that captures photons, and an electron transfer chain that converts photonic excitation into a charge separation. This Pisum sativum (Garden pea) protein is Cytochrome b559 subunit alpha.